Here is a 1230-residue protein sequence, read N- to C-terminus: Formin-like protein 14 (1230 aa).

In terms of domain architecture, Phosphatase tensin-type spans 1 to 194; it reads MSLLSRFFYK…QYVARRNINS (194 aa). Residue C127 is the Phosphocysteine intermediate of the active site. The C2 tensin-type domain occupies 200–339; sequence ERALSLDCVI…FRAEVLFGEV (140 aa). Disordered stretches follow at residues 412–432, 460–822, and 1187–1230; these read FNSP…SSDE, HESS…LKPL, and ENEK…RHRT. A compositionally biased stretch (low complexity) spans 484-496; it reads DNPLNLPSDPPSS. Composition is skewed to pro residues over residues 503-514, 524-535, 545-556, and 566-575; these read LPPPPPPPPPPL, SQPPPPPPPPPL, and SQPPPPPPLP. Polar residues predominate over residues 579–591; it reads NRDPLTTLHQPIN. Pro residues-rich tracts occupy residues 592–630, 637–649, 660–672, 679–688, 699–711, 718–728, and 735–766; these read KTPP…PPPS, PSAP…PPPS, QPPP…PPTR, APPPPPPPPT, PSTP…PPPK, PKPPAPPPLPP, and APPP…PPPG. The 399-residue stretch at 809–1207 folds into the FH2 domain; it reads VPTAAPKKTA…KLEKEAIKEK (399 aa). Residues 1187–1215 show a composition bias toward basic and acidic residues; the sequence is ENEKQAEAEKKKLEKEAIKEKSATKKDGV.

It belongs to the formin-like family. Class-II subfamily.

The protein is Formin-like protein 14 (FH14) of Arabidopsis thaliana (Mouse-ear cress).